Consider the following 547-residue polypeptide: Glucose-6-phosphate isomerase 1 (547 aa).

The Proton donor role is filled by Glu353. Catalysis depends on residues His384 and Lys512.

The protein belongs to the GPI family.

Its subcellular location is the cytoplasm. It catalyses the reaction alpha-D-glucose 6-phosphate = beta-D-fructose 6-phosphate. It participates in carbohydrate biosynthesis; gluconeogenesis. It functions in the pathway carbohydrate degradation; glycolysis; D-glyceraldehyde 3-phosphate and glycerone phosphate from D-glucose: step 2/4. In terms of biological role, catalyzes the reversible isomerization of glucose-6-phosphate to fructose-6-phosphate. The protein is Glucose-6-phosphate isomerase 1 of Chromobacterium violaceum (strain ATCC 12472 / DSM 30191 / JCM 1249 / CCUG 213 / NBRC 12614 / NCIMB 9131 / NCTC 9757 / MK).